Consider the following 304-residue polypeptide: MLEQALLDDLVAKVRPLLGQGKVADYIPALARVSPYKLGIAVTTIDGTTLGAGDWQEAFSIQSISKVFSLTGAMMLYEEREIWSRVGKEPSGHSFNSLVQVELERGIPRNPFINAGALVIADLLQSRLGAPKQRMLEIVRMLSQNHKVCYDKVVADSEYQHSARNAAIAFLMKSFGNFHNDVDKVLRSYFHYCSLSMSCADLSRAMVYLANQGVSLDGNEVVSPTQTRRLNALLATSGLYDGAGEFAYRVGMPGKSGVGGGIIAVIPGDMSVCVWSPALDASGNSLAGTRLLELLAQELGRSIF.

Substrate contacts are provided by serine 63, asparagine 114, glutamate 158, asparagine 165, tyrosine 189, tyrosine 240, and valine 258.

Belongs to the glutaminase family. As to quaternary structure, homotetramer.

The enzyme catalyses L-glutamine + H2O = L-glutamate + NH4(+). This is Glutaminase from Shewanella amazonensis (strain ATCC BAA-1098 / SB2B).